A 301-amino-acid chain; its full sequence is Homoserine kinase (301 aa).

Residue proline 86–threonine 96 participates in ATP binding.

It belongs to the GHMP kinase family. Homoserine kinase subfamily.

Its subcellular location is the cytoplasm. The catalysed reaction is L-homoserine + ATP = O-phospho-L-homoserine + ADP + H(+). The protein operates within amino-acid biosynthesis; L-threonine biosynthesis; L-threonine from L-aspartate: step 4/5. Its function is as follows. Catalyzes the ATP-dependent phosphorylation of L-homoserine to L-homoserine phosphate. In Thermosynechococcus vestitus (strain NIES-2133 / IAM M-273 / BP-1), this protein is Homoserine kinase.